Here is a 648-residue protein sequence, read N- to C-terminus: Indolepyruvate oxidoreductase subunit IorA (648 aa).

4Fe-4S ferredoxin-type domains are found at residues 585-614 (PIYQ…WDPE) and 616-645 (KKAK…KVRE). Residues Cys594, Cys597, Cys600, Cys606, Cys625, Cys628, Cys631, and Cys635 each contribute to the [4Fe-4S] cluster site.

Heterodimer of the IorA and IorB subunits. [4Fe-4S] cluster is required as a cofactor.

The catalysed reaction is indole-3-pyruvate + 2 oxidized [2Fe-2S]-[ferredoxin] + CoA = (indol-3-yl)acetyl-CoA + 2 reduced [2Fe-2S]-[ferredoxin] + CO2 + H(+). Catalyzes the ferredoxin-dependent oxidative decarboxylation of arylpyruvates. The sequence is that of Indolepyruvate oxidoreductase subunit IorA (iorA) from Pyrococcus abyssi (strain GE5 / Orsay).